Consider the following 1006-residue polypeptide: Cytosolic carboxypeptidase 3 (1006 aa).

In terms of domain architecture, Peptidase M14 spans tyrosine 304 to cysteine 576. Positions 368, 371, and 464 each coordinate Zn(2+). Glutamate 540 acts as the Proton donor/acceptor in catalysis. Residues glutamate 790–threonine 810 form a disordered region.

The protein belongs to the peptidase M14 family. Requires Zn(2+) as cofactor. Widely expressed. Expressed abundantly in tissues with m otile cilia such as testis, lung and trachea. Abundantly expressed in pituitary and kidney, moderately expressed in brain, eye, fat, pancreas, stomach, and adrenal.

It localises to the cytoplasm. The protein localises to the cytosol. The catalysed reaction is (L-glutamyl)(n+1)-gamma-L-glutamyl-L-glutamyl-[protein] + H2O = (L-glutamyl)(n)-gamma-L-glutamyl-L-glutamyl-[protein] + L-glutamate. Its function is as follows. Metallocarboxypeptidase that mediates deglutamylation of tubulin and non-tubulin target proteins. Catalyzes the removal of polyglutamate side chains present on the gamma-carboxyl group of glutamate residues within the C-terminal tail of tubulin protein. Specifically cleaves tubulin long-side-chains, while it is not able to remove the branching point glutamate. Also catalyzes the removal of polyglutamate residues from the carboxy-terminus of non-tubulin proteins such as MYLK. May catalyze the hydrolysis of aspartate from the carboxy-terminus of target proteins. Does not show detyrosinase or deglycylase activities from the carboxy-terminus of target proteins. The sequence is that of Cytosolic carboxypeptidase 3 from Mus musculus (Mouse).